A 100-amino-acid polypeptide reads, in one-letter code: Small ribosomal subunit protein uS14c (100 aa).

Residues 1–54 (MARKSLIQRERKRQKLEQKFHSIRRSSKKEISKVSSLSGKWEIHGKLQSPPRNS) form a disordered region.

This sequence belongs to the universal ribosomal protein uS14 family. In terms of assembly, part of the 30S ribosomal subunit.

The protein localises to the plastid. The protein resides in the chloroplast. Its function is as follows. Binds 16S rRNA, required for the assembly of 30S particles. In Piper cenocladum (Ant piper), this protein is Small ribosomal subunit protein uS14c.